The primary structure comprises 295 residues: MKKPACIGRFAPTPSGYLHFGSLVAALASYLDARAADGQWLLRMEDLDPPREVAGAQAGILETLERYGFEWDGQMVRQSERHDAYAEILQRWFNHGLAYACTCSRKQLEGFQGIYPGFCRNAGHSPDNAAIRIRVPELEYRFDDRVQGTFKMHLGRESGDFVIRRRDGLYAYQLAVVIDDAWQGVTDIVRGADLLDSTPRQLYLQELLGLPQPRYLHVPLITQPDGHKLGKSYRSPPLPADQATPLLLRALRALGQPLDTHMADGTAQEVLAWGIRHWNADLIPRLRNIEEARID.

L-glutamate contacts are provided by residues 9–13 and E45; that span reads RFAPT. Positions 12–22 match the 'HIGH' region motif; sequence PTPSGYLHFGS. Zn(2+) contacts are provided by C101, C103, Y115, and C119. Positions 172 and 190 each coordinate L-glutamate. The 'KMSKS' region signature appears at 228 to 232; that stretch reads KLGKS. K231 is an ATP binding site.

The protein belongs to the class-I aminoacyl-tRNA synthetase family. GluQ subfamily. Zn(2+) is required as a cofactor.

Its function is as follows. Catalyzes the tRNA-independent activation of glutamate in presence of ATP and the subsequent transfer of glutamate onto a tRNA(Asp). Glutamate is transferred on the 2-amino-5-(4,5-dihydroxy-2-cyclopenten-1-yl) moiety of the queuosine in the wobble position of the QUC anticodon. The protein is Glutamyl-Q tRNA(Asp) synthetase of Pseudomonas syringae pv. syringae (strain B728a).